The primary structure comprises 506 residues: Nucleosome assembly protein 1-like 3 (506 aa).

Disordered stretches follow at residues 1–95 and 157–307; these read MAEA…LGTN and PTEE…KRED. A compositionally biased stretch (low complexity) spans 35–70; sequence SSSSSSSTSDSSSSSSTSGSSSGSGSSSSSSGSTSS. The span at 157–178 shows a compositional bias: acidic residues; the sequence is PTEEECEWNSEDEEFSSDEEVQ. The span at 196 to 296 shows a compositional bias: basic and acidic residues; that stretch reads PKENPEVKAE…ERLQDSVDLK (101 aa).

The protein belongs to the nucleosome assembly protein (NAP) family.

It localises to the nucleus. This chain is Nucleosome assembly protein 1-like 3 (NAP1L3), found in Homo sapiens (Human).